Here is a 60-residue protein sequence, read N- to C-terminus: LKCNKLIPLAYKTCPAGKNLCYKMFMVAAPKVPVKRGCIDACPKNSLLVKYVCCNTDRCN.

Intrachain disulfides connect C3–C21, C14–C38, C42–C53, and C54–C59.

It belongs to the three-finger toxin family. Short-chain subfamily. Type IA cytotoxin sub-subfamily. Monomer in solution; Homodimer and oligomer in the presence of negatively charged lipids forming a pore with a size ranging between 20 and 30 Angstroms. As to expression, expressed by the venom gland.

The protein resides in the secreted. It localises to the target cell membrane. In terms of biological role, shows cytolytic activity on many different cells by forming pore in lipid membranes. In vivo, increases heart rate or kills the animal by cardiac arrest. In addition, it binds to heparin with high affinity, interacts with Kv channel-interacting protein 1 (KCNIP1) in a calcium-independent manner, and binds to integrin alpha-V/beta-3 (ITGAV/ITGB3) with moderate affinity. The protein is Cytotoxin 5 of Naja kaouthia (Monocled cobra).